An 808-amino-acid polypeptide reads, in one-letter code: Copal-8-ol diphosphate hydratase, chloroplastic (808 aa).

The transit peptide at 1–50 (MAFTFTSAHLFLPVTENHSVHVNYSIPPGNWRLWSTAKGGSNKLDIRRLR) directs the protein to the chloroplast. Positions 190-219 (DKCQKGLKFFRDNISKLEKENVEASAQMLS) form a coiled coil. Substrate is bound at residue Lys256. Mg(2+) contacts are provided by Asp391 and Asp393. The DXDD motif motif lies at 391 to 394 (DLDD). Substrate is bound at residue Lys477.

The protein belongs to the terpene synthase family. It depends on Mg(2+) as a cofactor. In terms of tissue distribution, expressed in stems, leaves and trichomes. Not detected in roots and seeds. Higher expression in young leaves than in fully expanded leaves.

It is found in the plastid. Its subcellular location is the chloroplast. The enzyme catalyses (2E,6E,10E)-geranylgeranyl diphosphate + H2O = 8-hydroxycopalyl diphosphate. Its pathway is secondary metabolite biosynthesis; terpenoid biosynthesis. In terms of biological role, involved in the biosynthesis of oxygen-containing labdane-type diterpenes that may be implicated in direct and indirect defense mechanisms. No activity with geranyl diphosphate or farnesyl diphosphate as substrate. This chain is Copal-8-ol diphosphate hydratase, chloroplastic, found in Cistus creticus subsp. creticus (Rock rose).